A 575-amino-acid polypeptide reads, in one-letter code: Glutathione hydrolase proenzyme (575 aa).

A signal peptide spans 1-24; that stretch reads MKNQTFSKALLATALSCALFNVHA. An L-glutamate-binding site is contributed by arginine 100. Threonine 376 acts as the Nucleophile in catalysis. L-glutamate-binding positions include threonine 394, asparagine 396, glutamate 415, aspartate 418, 447 to 448, and 468 to 469; these read SS and GG.

The protein belongs to the gamma-glutamyltransferase family. This enzyme consists of two polypeptide chains, which are synthesized in precursor form from a single polypeptide. Cleaved by autocatalysis into a large and a small subunit.

Its subcellular location is the periplasm. It carries out the reaction an N-terminal (5-L-glutamyl)-[peptide] + an alpha-amino acid = 5-L-glutamyl amino acid + an N-terminal L-alpha-aminoacyl-[peptide]. The enzyme catalyses glutathione + H2O = L-cysteinylglycine + L-glutamate. The catalysed reaction is an S-substituted glutathione + H2O = an S-substituted L-cysteinylglycine + L-glutamate. It participates in sulfur metabolism; glutathione metabolism. The chain is Glutathione hydrolase proenzyme (ggt) from Pseudomonas sp. (strain A14).